Reading from the N-terminus, the 321-residue chain is Olfactory receptor 3A2 (321 aa).

The Extracellular segment spans residues 1–35; that stretch reads MSLQKLMEPEAGTNRTAVAEFILLGLVQTEEMQPV. Asn14 carries N-linked (GlcNAc...) asparagine glycosylation. Residues 36–58 form a helical membrane-spanning segment; it reads VFVLLLFAYLVTTGGNLSILAAV. Topologically, residues 59–66 are cytoplasmic; it reads LVEPKLHA. The chain crosses the membrane as a helical span at residues 67–88; the sequence is PMYFFLGNLSVLDVGCITVTVP. The Extracellular portion of the chain corresponds to 89–109; it reads AMLGRLLSHKSTISYDACLSQ. A disulfide bridge connects residues Cys106 and Cys198. Residues 110–129 form a helical membrane-spanning segment; sequence LFFFHLLAGMDCFLLTAMAY. The Cytoplasmic portion of the chain corresponds to 130-149; sequence DRLLAICQPLTYSTRMSQTV. A helical transmembrane segment spans residues 150-167; the sequence is QRMLVAASLACAFTNALT. The Extracellular segment spans residues 168–205; it reads HTVAMSTLNFCGPNEVNHFYCDLPQLFQLSCSSTQLNE. Residues 206–229 form a helical membrane-spanning segment; it reads LLLFAVGFIMAGTPLVLIITAYSH. The Cytoplasmic portion of the chain corresponds to 230 to 246; the sequence is VAAAVLRIRSVEGRKKA. The helical transmembrane segment at 247–270 threads the bilayer; the sequence is FSTCGSHLTVVCLFFGRGIFNYMR. The Extracellular portion of the chain corresponds to 271–281; that stretch reads LGSEEASDKDK. A helical membrane pass occupies residues 282–301; it reads GVGVFNTVINPMLNPLIYSL. Residues 302-321 lie on the Cytoplasmic side of the membrane; that stretch reads RNPDVQGALWQIFLGRRSLT.

This sequence belongs to the G-protein coupled receptor 1 family.

The protein localises to the cell membrane. Its function is as follows. Odorant receptor. This chain is Olfactory receptor 3A2 (OR3A2), found in Homo sapiens (Human).